Here is a 180-residue protein sequence, read N- to C-terminus: Alpha-S2-casein-like A (180 aa).

Residues 1-15 (MRFFVFTCLLAVALA) form the signal peptide. 2 positions are modified to phosphoserine: S23 and S25. Residues 46 to 66 (PTNQETPSVSSSEESVEVQTE) form a disordered region.

This sequence belongs to the alpha-casein family. Mammary gland specific. Secreted in milk.

The protein resides in the secreted. Functionally, important role in the capacity of milk to transport calcium phosphate. This is Alpha-S2-casein-like A (CSN1S2A) from Oryctolagus cuniculus (Rabbit).